The sequence spans 450 residues: NADP-specific glutamate dehydrogenase (450 aa).

Residue K114 is part of the active site.

Belongs to the Glu/Leu/Phe/Val dehydrogenases family. Homohexamer.

The catalysed reaction is L-glutamate + NADP(+) + H2O = 2-oxoglutarate + NH4(+) + NADPH + H(+). The chain is NADP-specific glutamate dehydrogenase (gdhA) from Botryotinia fuckeliana (Noble rot fungus).